Reading from the N-terminus, the 516-residue chain is MYVNGRILRILKFKKDGFRQQNFLYPLLLQEYIYSLAHDHNFNSFFFYKPVEIFGYDNKSSLVLVKRLITRMYQQNSLISSVNYSNQKGFWGHKNFFFSNFYSQMVSEGFGVILEIPFSSQLVSSLEEKKIPKSQNLRSIHSIFPFLEDKFLHLNYVSDLLIPHPIHLEILVQILQCWIKDVPSLHLLRLLFHEYHYFNSLITSKKSIYAFSRIKKRFLWFLYNSYVYECEYLFHFLRKQSSYLRSTSSGVFLERTHFYVKIEHLIVVCCNSFHRILCFLKDPFMHYVRYQGKAILASKGTLILMKKWKFHLVNFWQSYLHFWSQPYRIHIKQLYNYSFSFLGYFSSVLENHLVVRNQMLENSFLINIMTKKLDTIAPVISLIGSLSKAQFCTVLGHPISKPIWTDLSDSDILDRFCRICRNLCRYHSGSSKKKVLYRIKYILRFSCARTLARKHKSTVRTFMRRLGSGLLEEFFMEEEVLSLIFLQKIPFPLHGSHRDRIWYLDIIHINDLVDHS.

This sequence belongs to the intron maturase 2 family. MatK subfamily.

The protein localises to the plastid. It localises to the chloroplast. Usually encoded in the trnK tRNA gene intron. Probably assists in splicing its own and other chloroplast group II introns. This is Maturase K from Cypripedium calceolus (Yellow lady's slipper).